A 467-amino-acid chain; its full sequence is Citrate synthase, mitochondrial (467 aa).

Residues His301 and His347 contribute to the active site.

The protein belongs to the citrate synthase family.

It is found in the mitochondrion matrix. It carries out the reaction oxaloacetate + acetyl-CoA + H2O = citrate + CoA + H(+). Its pathway is carbohydrate metabolism; tricarboxylic acid cycle; isocitrate from oxaloacetate: step 1/2. The chain is Citrate synthase, mitochondrial (CIT) from Candida tropicalis (Yeast).